Reading from the N-terminus, the 472-residue chain is Argininosuccinate lyase (472 aa).

The protein belongs to the lyase 1 family. Argininosuccinate lyase subfamily.

The protein resides in the cytoplasm. The enzyme catalyses 2-(N(omega)-L-arginino)succinate = fumarate + L-arginine. The protein operates within amino-acid biosynthesis; L-arginine biosynthesis; L-arginine from L-ornithine and carbamoyl phosphate: step 3/3. The protein is Argininosuccinate lyase of Polynucleobacter asymbioticus (strain DSM 18221 / CIP 109841 / QLW-P1DMWA-1) (Polynucleobacter necessarius subsp. asymbioticus).